Here is a 348-residue protein sequence, read N- to C-terminus: Beta-hexosaminidase (348 aa).

Substrate contacts are provided by residues aspartate 62, arginine 70, arginine 134, and 164 to 165 (KH). Histidine 177 acts as the Proton donor/acceptor in catalysis. Aspartate 249 functions as the Nucleophile in the catalytic mechanism.

The protein belongs to the glycosyl hydrolase 3 family. NagZ subfamily.

It localises to the cytoplasm. The enzyme catalyses Hydrolysis of terminal non-reducing N-acetyl-D-hexosamine residues in N-acetyl-beta-D-hexosaminides.. It functions in the pathway cell wall biogenesis; peptidoglycan recycling. In terms of biological role, plays a role in peptidoglycan recycling by cleaving the terminal beta-1,4-linked N-acetylglucosamine (GlcNAc) from peptide-linked peptidoglycan fragments, giving rise to free GlcNAc, anhydro-N-acetylmuramic acid and anhydro-N-acetylmuramic acid-linked peptides. In Histophilus somni (strain 2336) (Haemophilus somnus), this protein is Beta-hexosaminidase.